The primary structure comprises 668 residues: Transketolase 1 (668 aa).

Histidine 26 is a binding site for substrate. Thiamine diphosphate-binding positions include histidine 66 and 114 to 116 (GPL). Mg(2+) is bound at residue aspartate 155. Thiamine diphosphate is bound by residues glycine 156 and asparagine 185. Positions 185 and 187 each coordinate Mg(2+). The substrate site is built by histidine 261, arginine 358, and serine 385. Histidine 261 contributes to the thiamine diphosphate binding site. The active-site Proton donor is glutamate 413. Residue phenylalanine 439 coordinates thiamine diphosphate. Residues histidine 463, aspartate 471, and arginine 522 each contribute to the substrate site.

This sequence belongs to the transketolase family. Homodimer. Mg(2+) serves as cofactor. Ca(2+) is required as a cofactor. The cofactor is Mn(2+). Requires Co(2+) as cofactor. It depends on thiamine diphosphate as a cofactor.

The catalysed reaction is D-sedoheptulose 7-phosphate + D-glyceraldehyde 3-phosphate = aldehydo-D-ribose 5-phosphate + D-xylulose 5-phosphate. Catalyzes the transfer of a two-carbon ketol group from a ketose donor to an aldose acceptor, via a covalent intermediate with the cofactor thiamine pyrophosphate. This chain is Transketolase 1 (tktA), found in Pasteurella multocida (strain Pm70).